The following is a 126-amino-acid chain: Probable 4-amino-4-deoxy-L-arabinose-phosphoundecaprenol flippase subunit ArnF (126 aa).

The chain crosses the membrane as a helical span at residues 1-21 (MGFFWALLSVGLVSAAQLLLR). The Periplasmic portion of the chain corresponds to 22-47 (SAMVALPPLTDIVAFLQHLLHFQPGT). The chain crosses the membrane as a helical span at residues 48–68 (FGLFFGLLGYLLSMVCWYFAL). Residues 69–76 (HRLPLSKA) lie on the Cytoplasmic side of the membrane. The helical transmembrane segment at 77–97 (YALLSLSYILVWAAAIWLPGW) threads the bilayer. Residues 98 to 100 (HEP) are Periplasmic-facing. Residues 101 to 121 (FYWQSLLGVAIIVAGVLTIFW) form a helical membrane-spanning segment. At 122-126 (PVKRR) the chain is on the cytoplasmic side.

The protein belongs to the ArnF family. As to quaternary structure, heterodimer of ArnE and ArnF.

It is found in the cell inner membrane. Its pathway is bacterial outer membrane biogenesis; lipopolysaccharide biosynthesis. Functionally, translocates 4-amino-4-deoxy-L-arabinose-phosphoundecaprenol (alpha-L-Ara4N-phosphoundecaprenol) from the cytoplasmic to the periplasmic side of the inner membrane. The polypeptide is Probable 4-amino-4-deoxy-L-arabinose-phosphoundecaprenol flippase subunit ArnF (Klebsiella pneumoniae subsp. pneumoniae (strain ATCC 700721 / MGH 78578)).